We begin with the raw amino-acid sequence, 304 residues long: Urease accessory protein UreD 2 (304 aa).

Belongs to the UreD family. UreD, UreF and UreG form a complex that acts as a GTP-hydrolysis-dependent molecular chaperone, activating the urease apoprotein by helping to assemble the nickel containing metallocenter of UreC. The UreE protein probably delivers the nickel.

It localises to the cytoplasm. In terms of biological role, required for maturation of urease via the functional incorporation of the urease nickel metallocenter. Disrupting the ure2 operon has no effect on urease activity or pathogen survival in BALB/c mice when administered orally. The chain is Urease accessory protein UreD 2 from Brucella abortus (strain 2308).